Consider the following 370-residue polypeptide: NADH-quinone oxidoreductase subunit D (370 aa).

This sequence belongs to the complex I 49 kDa subunit family. As to quaternary structure, NDH-1 is composed of 14 different subunits. Subunits NuoB, C, D, E, F, and G constitute the peripheral sector of the complex.

Its subcellular location is the cell membrane. It catalyses the reaction a quinone + NADH + 5 H(+)(in) = a quinol + NAD(+) + 4 H(+)(out). NDH-1 shuttles electrons from NADH, via FMN and iron-sulfur (Fe-S) centers, to quinones in the respiratory chain. The immediate electron acceptor for the enzyme in this species is believed to be a menaquinone. Couples the redox reaction to proton translocation (for every two electrons transferred, four hydrogen ions are translocated across the cytoplasmic membrane), and thus conserves the redox energy in a proton gradient. This chain is NADH-quinone oxidoreductase subunit D, found in Desulfitobacterium hafniense (strain Y51).